We begin with the raw amino-acid sequence, 721 residues long: Cytosolic carboxypeptidase 2 (721 aa).

The segment at 43-71 (TASDMINSSSPSESSDSNLEEEQEESKPC) is disordered. Positions 50–59 (SSSPSESSDS) are enriched in low complexity. Residues 334–605 (YPYTYSKLQH…CFCDTLLDFC (272 aa)) form the Peptidase M14 domain. Residues H400, E403, and H496 each contribute to the Zn(2+) site. E569 functions as the Proton donor/acceptor in the catalytic mechanism. The segment at 645–721 (DIESSTSGSN…TQHGDTEDQS (77 aa)) is disordered. Residues 647-660 (ESSTSGSNSTESDG) are compositionally biased toward low complexity. Positions 672–688 (GKKKLLRSRKERNRLRQ) are enriched in basic residues. Positions 703–714 (YSCQTLNATTQH) are enriched in polar residues.

Belongs to the peptidase M14 family. Zn(2+) serves as cofactor.

It localises to the cytoplasm. Its subcellular location is the cytosol. The protein resides in the cytoskeleton. It is found in the microtubule organizing center. The protein localises to the centrosome. It localises to the centriole. Its subcellular location is the cilium basal body. It carries out the reaction (L-glutamyl)(n+1)-gamma-L-glutamyl-L-glutamyl-[protein] + H2O = (L-glutamyl)(n)-gamma-L-glutamyl-L-glutamyl-[protein] + L-glutamate. Metallocarboxypeptidase that mediates deglutamylation of target proteins. Catalyzes the deglutamylation of polyglutamate side chains generated by post-translational polyglutamylation in proteins such as tubulins. Also removes gene-encoded polyglutamates from the carboxy-terminus of target proteins such as MYLK. Does not show detyrosinase or deglycylase activities from the carboxy-terminus of tubulin. Functionally, metallocarboxypeptidase that mediates deglutamylation of tubulin and non-tubulin target proteins. Catalyzes the removal of polyglutamate side chains present on the gamma-carboxyl group of glutamate residues within the C-terminal tail of tubulin protein. Specifically cleaves tubulin long-side-chains, while it is not able to remove the branching point glutamate. Also catalyzes the removal of polyglutamate residues from the carboxy-terminus of non-tubulin proteins. The polypeptide is Cytosolic carboxypeptidase 2 (zte25) (Danio rerio (Zebrafish)).